The sequence spans 328 residues: L-lactate dehydrogenase (328 aa).

NAD(+)-binding positions include valine 18, glutamate 39, lysine 46, tyrosine 71, and 85–86 (GA). 2 residues coordinate substrate: glutamine 88 and arginine 94. Residues serine 107, 124 to 126 (AAN), and serine 149 contribute to the NAD(+) site. 126-129 (NPVD) contacts substrate. 154–157 (DSAR) contacts substrate. 2 residues coordinate beta-D-fructose 1,6-bisphosphate: arginine 159 and histidine 174. Histidine 181 acts as the Proton acceptor in catalysis. Tyrosine 226 carries the phosphotyrosine modification. Position 235 (threonine 235) interacts with substrate.

It belongs to the LDH/MDH superfamily. LDH family. Homotetramer.

It localises to the cytoplasm. The catalysed reaction is (S)-lactate + NAD(+) = pyruvate + NADH + H(+). Its pathway is fermentation; pyruvate fermentation to lactate; (S)-lactate from pyruvate: step 1/1. With respect to regulation, allosterically activated by fructose 1,6-bisphosphate (FBP). Functionally, catalyzes the conversion of lactate to pyruvate. In Streptococcus sanguinis (strain SK36), this protein is L-lactate dehydrogenase.